The sequence spans 322 residues: 5'-AMP-activated protein kinase subunit gamma (322 aa).

CBS domains are found at residues 37 to 97 (VSYR…NPDK), 118 to 181 (VDQL…CRET), 194 to 253 (ITQD…YNDL), and 262 to 322 (MRRS…LGSN). Residues Ile-42, Arg-146, 166 to 169 (TQYR), and Thr-195 contribute to the ADP site. AMP is bound by residues Thr-195, Lys-200, and 221–222 (SS). Residues Thr-195, Lys-200, and 221–222 (SS) contribute to the ATP site. ADP-binding positions include 221 to 222 (SS), 291 to 293 (RVH), and 309 to 312 (TLSD). 309-312 (TLSD) is a binding site for AMP. 309–312 (TLSD) contacts ATP.

Belongs to the 5'-AMP-activated protein kinase gamma subunit family. In terms of assembly, AMPK is a heterotrimer of an alpha catalytic subunit (SNF1), a beta (SIP1, SIP2 or GAL83) and a gamma non-catalytic subunits (SNF4). Note=Interaction between SNF1 and SNF4 is inhibited by high levels of glucose.

Its subcellular location is the nucleus. It localises to the cytoplasm. Its function is as follows. Adenine nucleotides-binding subunit gamma of AMP-activated protein kinase (AMPK), an energy sensor protein kinase that plays a key role in regulating cellular energy metabolism. In response to reduction of intracellular ATP levels, AMPK activates energy-producing pathways and inhibits energy-consuming processes: inhibits protein, carbohydrate and lipid biosynthesis, as well as cell growth and proliferation. AMPK acts via direct phosphorylation of metabolic enzymes, and by longer-term effects via phosphorylation of transcription regulators. Gamma non-catalytic subunit mediates binding to AMP, ADP and ATP, leading to activate or inhibit AMPK: AMP-binding results in allosteric activation of alpha catalytic subunit (SNF1) both by inducing phosphorylation and preventing dephosphorylation of catalytic subunits. The sequence is that of 5'-AMP-activated protein kinase subunit gamma (SNF4) from Saccharomyces cerevisiae (strain ATCC 204508 / S288c) (Baker's yeast).